A 250-amino-acid chain; its full sequence is Aquaporin TIP2-2 (250 aa).

Helical transmembrane passes span 22–42 and 54–74; these read VAEF…AIAF and AGLV…VSVA. The NPA 1 motif lies at 83–85; sequence NPA. 3 helical membrane passes run 97-119, 142-162, and 169-189; these read TVLT…CLLL, GVVF…ATAA, and LGTI…LAAG. An NPA 2 motif is present at residues 197–199; that stretch reads NPA. Residues 218–238 form a helical membrane-spanning segment; the sequence is WVGPLIGGGLAGLVYGDVFIG.

The protein belongs to the MIP/aquaporin (TC 1.A.8) family. TIP (TC 1.A.8.10) subfamily.

It is found in the vacuole membrane. Aquaporins facilitate the transport of water and small neutral solutes across cell membranes. This Zea mays (Maize) protein is Aquaporin TIP2-2 (TIP2-2).